The sequence spans 880 residues: Valine--tRNA ligase (880 aa).

Residues 51-61 (PNVTGELHLGH) carry the 'HIGH' region motif. Positions 529–533 (KMSKT) match the 'KMSKS' region motif. Lys532 serves as a coordination point for ATP. Residues 815 to 854 (MSTMVDLEAEAKRVEAEIAELETQIERLSARLSDTQFLAK) are a coiled coil.

It belongs to the class-I aminoacyl-tRNA synthetase family. ValS type 1 subfamily. Monomer.

It localises to the cytoplasm. It carries out the reaction tRNA(Val) + L-valine + ATP = L-valyl-tRNA(Val) + AMP + diphosphate. Its function is as follows. Catalyzes the attachment of valine to tRNA(Val). As ValRS can inadvertently accommodate and process structurally similar amino acids such as threonine, to avoid such errors, it has a 'posttransfer' editing activity that hydrolyzes mischarged Thr-tRNA(Val) in a tRNA-dependent manner. In Dehalococcoides mccartyi (strain ATCC BAA-2266 / KCTC 15142 / 195) (Dehalococcoides ethenogenes (strain 195)), this protein is Valine--tRNA ligase.